The chain runs to 413 residues: Glucose-1-phosphate adenylyltransferase (413 aa).

Alpha-D-glucose 1-phosphate contacts are provided by residues G163, E179–K180, and S197.

Belongs to the bacterial/plant glucose-1-phosphate adenylyltransferase family. In terms of assembly, homotetramer.

It carries out the reaction alpha-D-glucose 1-phosphate + ATP + H(+) = ADP-alpha-D-glucose + diphosphate. It functions in the pathway glycan biosynthesis; glycogen biosynthesis. Involved in the biosynthesis of ADP-glucose, a building block required for the elongation reactions to produce glycogen. Catalyzes the reaction between ATP and alpha-D-glucose 1-phosphate (G1P) to produce pyrophosphate and ADP-Glc. The sequence is that of Glucose-1-phosphate adenylyltransferase from Parafrankia sp. (strain EAN1pec).